The primary structure comprises 134 residues: MASLNLEIITPERVVLQAEAASVIAPGIQGYLGVLPEHAPLITPLQAGVVTCRRRERAEERVAVSGGFLEAGPDQVIILADTAERSEEIDVEWARQARERAERRLRERPPGLDVARAEAALRRAVARLKAAGAI.

This sequence belongs to the ATPase epsilon chain family. As to quaternary structure, F-type ATPases have 2 components, CF(1) - the catalytic core - and CF(0) - the membrane proton channel. CF(1) has five subunits: alpha(3), beta(3), gamma(1), delta(1), epsilon(1). CF(0) has three main subunits: a, b and c. In this bacterium the a and b subunits are transcribed but do not seem to be translated, thus the ATP synthase consists of the alpha, beta, gamma, delta, epsilon and c subunits.

It is found in the cell membrane. Functionally, produces ATP from ADP in the presence of a proton gradient across the membrane. The sequence is that of ATP synthase epsilon chain from Moorella thermoacetica (strain ATCC 39073 / JCM 9320).